Consider the following 551-residue polypeptide: Eukaryotic translation initiation factor 3 subunit D-2 (551 aa).

Residues 91 to 154 (TKPYQRGRYR…RNTQNMGRRF (64 aa)) are disordered. A compositionally biased stretch (basic residues) spans 95 to 113 (QRGRYRPNMRNNVRSRGRT). Over residues 121–136 (ASLGGSTAGGATASTT) the composition is skewed to low complexity. An RNA gate region spans residues 290 to 304 (QFDLLTVNETSVEPP). The tract at residues 527-551 (PENAFDSDGDEEEESSDPLSNSNDN) is disordered. The span at 531–542 (FDSDGDEEEESS) shows a compositional bias: acidic residues.

It belongs to the eIF-3 subunit D family. As to quaternary structure, component of the eukaryotic translation initiation factor 3 (eIF-3) complex. The eIF-3 complex interacts with pix.

Its subcellular location is the cytoplasm. In terms of biological role, mRNA cap-binding component of the eukaryotic translation initiation factor 3 (eIF-3) complex, which is involved in protein synthesis of a specialized repertoire of mRNAs and, together with other initiation factors, stimulates binding of mRNA and methionyl-tRNAi to the 40S ribosome. The eIF-3 complex specifically targets and initiates translation of a subset of mRNAs involved in cell proliferation. In the eIF-3 complex, eif3d specifically recognizes and binds the 7-methylguanosine cap of a subset of mRNAs. This Drosophila melanogaster (Fruit fly) protein is Eukaryotic translation initiation factor 3 subunit D-2.